We begin with the raw amino-acid sequence, 1131 residues long: Plasma membrane ATPase (1131 aa).

The next 6 helical transmembrane spans lie at 77-97, 98-118, 151-171, 231-251, 265-285, and 305-325; these read PVLV…EAAA, IISI…LLLI, GAIV…LIRL, AVVY…LISG, MSAI…AVQF, and MLVV…SVTL. Aspartate 357 serves as the catalytic 4-aspartylphosphate intermediate. Mg(2+)-binding residues include aspartate 615 and aspartate 619. The next 5 membrane-spanning stretches (helical) occupy residues 642–662, 689–709, 733–753, 884–904, and 946–966; these read AADI…VIGA, LITV…MAVF, ITNI…STWA, LAFF…LGGF, and VIGC…WYVL. Positions 994-1010 are enriched in basic and acidic residues; it reads KRSLDRRSKDDIGDKEF. 2 disordered regions span residues 994 to 1023 and 1067 to 1131; these read KRSL…NYSN and RRSM…TIRE. The span at 1089 to 1100 shows a compositional bias: polar residues; the sequence is SRTSNTLSTGSK. A compositionally biased stretch (basic and acidic residues) spans 1118-1131; sequence IKPDKYDFASTIRE.

This sequence belongs to the cation transport ATPase (P-type) (TC 3.A.3) family. Type IIIA subfamily.

Its subcellular location is the cell membrane. The enzyme catalyses ATP + H2O + H(+)(in) = ADP + phosphate + 2 H(+)(out). Its function is as follows. The plasma membrane ATPase of plants and fungi is a hydrogen ion pump. The proton gradient it generates drives the active transport of nutrients by H(+)-symport. The resulting external acidification and/or internal alkinization may mediate growth responses. This chain is Plasma membrane ATPase (PMA1), found in Dunaliella bioculata (Green alga).